The chain runs to 388 residues: Phosphopentomutase (388 aa).

Residues Asp11, Asp283, His288, Asp324, His325, and His336 each coordinate Mn(2+).

It belongs to the phosphopentomutase family. It depends on Mn(2+) as a cofactor.

Its subcellular location is the cytoplasm. It catalyses the reaction 2-deoxy-alpha-D-ribose 1-phosphate = 2-deoxy-D-ribose 5-phosphate. The catalysed reaction is alpha-D-ribose 1-phosphate = D-ribose 5-phosphate. It functions in the pathway carbohydrate degradation; 2-deoxy-D-ribose 1-phosphate degradation; D-glyceraldehyde 3-phosphate and acetaldehyde from 2-deoxy-alpha-D-ribose 1-phosphate: step 1/2. Functionally, isomerase that catalyzes the conversion of deoxy-ribose 1-phosphate (dRib-1-P) and ribose 1-phosphate (Rib-1-P) to deoxy-ribose 5-phosphate (dRib-5-P) and ribose 5-phosphate (Rib-5-P), respectively. The chain is Phosphopentomutase from Enterococcus faecalis (strain ATCC 700802 / V583).